A 363-amino-acid polypeptide reads, in one-letter code: Carbamoyl phosphate synthase small chain (363 aa).

A CPSase region spans residues M1 to R172. L-glutamine contacts are provided by S46, G220, and G222. A Glutamine amidotransferase type-1 domain is found at R172 to G359. Catalysis depends on C247, which acts as the Nucleophile. L-glutamine is bound by residues L248, Q251, N289, G291, and Y292. Active-site residues include H332 and E334.

It belongs to the CarA family. As to quaternary structure, composed of two chains; the small (or glutamine) chain promotes the hydrolysis of glutamine to ammonia, which is used by the large (or ammonia) chain to synthesize carbamoyl phosphate. Tetramer of heterodimers (alpha,beta)4.

The enzyme catalyses hydrogencarbonate + L-glutamine + 2 ATP + H2O = carbamoyl phosphate + L-glutamate + 2 ADP + phosphate + 2 H(+). It carries out the reaction L-glutamine + H2O = L-glutamate + NH4(+). It functions in the pathway amino-acid biosynthesis; L-arginine biosynthesis; carbamoyl phosphate from bicarbonate: step 1/1. Its pathway is pyrimidine metabolism; UMP biosynthesis via de novo pathway; (S)-dihydroorotate from bicarbonate: step 1/3. In terms of biological role, small subunit of the glutamine-dependent carbamoyl phosphate synthetase (CPSase). CPSase catalyzes the formation of carbamoyl phosphate from the ammonia moiety of glutamine, carbonate, and phosphate donated by ATP, constituting the first step of 2 biosynthetic pathways, one leading to arginine and/or urea and the other to pyrimidine nucleotides. The small subunit (glutamine amidotransferase) binds and cleaves glutamine to supply the large subunit with the substrate ammonia. The chain is Carbamoyl phosphate synthase small chain from Listeria monocytogenes serovar 1/2a (strain ATCC BAA-679 / EGD-e).